The following is a 684-amino-acid chain: Agnestins biosynthesis cluster transcription factor AgnL11 (684 aa).

Residues 25 to 51 (CHFCRTKKLKCDRRFPCSNCRARRLSC) constitute a DNA-binding region (zn(2)-C6 fungal-type). The stretch at 76 to 103 (NEELSENINELKARLQRLEELISVNAEE) forms a coiled coil. The tract at residues 601–644 (KGSASARKDKNPIHGDTDRATPPGSSNLPQHDKSSSSSPAPPVW) is disordered. Basic and acidic residues predominate over residues 606–619 (ARKDKNPIHGDTDR).

Its subcellular location is the nucleus. Its function is as follows. Transcription factor that regulates the expression of the gene cluster that mediates the biosynthesis of agnestins, dihydroxy-xanthone metabolites. This is Agnestins biosynthesis cluster transcription factor AgnL11 from Paecilomyces divaricatus (Penicillium divaricatum).